Consider the following 1179-residue polypeptide: ATP-dependent helicase/deoxyribonuclease subunit B (1179 aa).

The protein belongs to the helicase family. AddB/RexB type 2 subfamily. As to quaternary structure, heterodimer of AddA and RexB. The cofactor is Mg(2+).

Its function is as follows. The heterodimer acts as both an ATP-dependent DNA helicase and an ATP-dependent, dual-direction single-stranded exonuclease. Recognizes the chi site generating a DNA molecule suitable for the initiation of homologous recombination. This subunit has 5' -&gt; 3' nuclease activity but not helicase activity. This chain is ATP-dependent helicase/deoxyribonuclease subunit B, found in Lacticaseibacillus paracasei (strain ATCC 334 / BCRC 17002 / CCUG 31169 / CIP 107868 / KCTC 3260 / NRRL B-441) (Lactobacillus paracasei).